An 83-amino-acid chain; its full sequence is uncharacterized protein (83 aa).

The helical transmembrane segment at 58–78 (AVLLWIAIIATLGNIVVVGVV) threads the bilayer.

It is found in the membrane. This is an uncharacterized protein from Homo sapiens (Human).